We begin with the raw amino-acid sequence, 222 residues long: UPF0128 protein PF1488 (222 aa).

Belongs to the UPF0128 family.

This Pyrococcus furiosus (strain ATCC 43587 / DSM 3638 / JCM 8422 / Vc1) protein is UPF0128 protein PF1488.